We begin with the raw amino-acid sequence, 142 residues long: Large ribosomal subunit protein uL13 (142 aa).

It belongs to the universal ribosomal protein uL13 family. As to quaternary structure, part of the 50S ribosomal subunit.

This protein is one of the early assembly proteins of the 50S ribosomal subunit, although it is not seen to bind rRNA by itself. It is important during the early stages of 50S assembly. This is Large ribosomal subunit protein uL13 from Halorhodospira halophila (strain DSM 244 / SL1) (Ectothiorhodospira halophila (strain DSM 244 / SL1)).